Reading from the N-terminus, the 539-residue chain is MIO-dependent tyrosine 2,3-aminomutase (539 aa).

Y63 (proton donor/acceptor) is an active-site residue. H93 is a substrate binding site. Residues 152 to 154 constitute a cross-link (5-imidazolinone (Ala-Gly)); the sequence is ASG. Position 153 is a 2,3-didehydroalanine (Ser) (S153). Substrate-binding residues include N205 and R311.

This sequence belongs to the TAL/TAM family. In terms of assembly, homotetramer; dimer of dimers. In terms of processing, contains an active site 4-methylidene-imidazol-5-one (MIO), which is formed autocatalytically by cyclization and dehydration of residues Ala-Ser-Gly.

The catalysed reaction is L-tyrosine = 3-amino-3-(4-hydroxyphenyl)propanoate. The enzyme catalyses L-tyrosine = (E)-4-coumarate + NH4(+). Involved in the biosynthesis of the enediyne antitumor antibiotic C-1027. Catalyzes the MIO-dependent deamination of L-tyrosine generating the corresponding alpha,beta-unsaturated acid, (S)-beta-tyrosine. The chain is MIO-dependent tyrosine 2,3-aminomutase from Streptomyces globisporus.